A 503-amino-acid polypeptide reads, in one-letter code: Secreted RxLR effector protein RXLR-C08 (503 aa).

The N-terminal stretch at 1 to 22 is a signal peptide; it reads MRLCGVASAFLSTLILIAHIDA. N-linked (GlcNAc...) asparagine glycosylation is found at Asn27, Asn35, and Asn45. The dEER signature appears at 57–60; that stretch reads DEER. Residues Asn108, Asn197, and Asn374 are each glycosylated (N-linked (GlcNAc...) asparagine).

Belongs to the RxLR effector family.

It localises to the secreted. It is found in the host Golgi apparatus. Functionally, secreted effector that suppresses pattern-triggered immunity (PTI) in plant host. This is Secreted RxLR effector protein RXLR-C08 from Plasmopara halstedii (Downy mildew of sunflower).